Here is a 4351-residue protein sequence, read N- to C-terminus: Protocadherin Fat 2 (4351 aa).

Positions 1 to 18 (MTLVLLGLAILLLHRAAC) are cleaved as a signal peptide. Residues 19-4050 (EKSLEETIPP…IKRGDWGQQE (4032 aa)) lie on the Extracellular side of the membrane. Cadherin domains follow at residues 34–148 (THSL…KPLF) and 149–256 (SPPS…PPAI). N39, N210, N280, and N330 each carry an N-linked (GlcNAc...) asparagine glycan. Cadherin domains follow at residues 363–458 (EKAV…APVF), 459–564 (NRSS…QPMF), 565–669 (EEVN…VPVQ), 716–820 (DHFP…PPRF), 821–925 (PPGG…PPQC), 926–1032 (ITEH…SPHF), 1033–1142 (SSFV…RPVF), 1138–1242 (SRPV…PPMF), 1243–1346 (SHKL…SSIP), 1350–1448 (DESY…RPQF), 1449–1555 (LQDH…SPHF), 1556–1660 (TQLR…APVF), 1661–1758 (SKDE…PPAF), 1759–1872 (GKPT…PPRF), 1873–1968 (SEQI…SLQF), 1969–2070 (DQDV…IPEF), 2071–2171 (QHLP…NPLF), 2172–2272 (QSPY…PPTF), 2273–2379 (SQLV…PPKF), 2380–2481 (REPQ…SPEF), 2482–2585 (QQNV…APQF), 2586–2692 (KASG…LPKF), 2693–2799 (SEPL…RPVF), 2800–2908 (EADP…PPRF), 2909–3013 (ASED…SPQC), 3014–3115 (SQLL…APRF), 3116–3220 (FPSH…LPIF), 3221–3323 (LNAE…HPRF), 3324–3428 (THDL…PPRF), 3429–3533 (FQLN…PPST), and 3534–3631 (LPLE…VPQQ). Residues N459, N568, N627, and N789 are each glycosylated (N-linked (GlcNAc...) asparagine). N996 carries an N-linked (GlcNAc...) asparagine glycan. 3 N-linked (GlcNAc...) asparagine glycosylation sites follow: N1175, N1276, and N1417. Residues N1899, N1998, N2007, N2102, N2165, N2183, N2325, N2368, N2387, N2430, N2470, N2547, and N2597 are each glycosylated (N-linked (GlcNAc...) asparagine). Residues N3127, N3278, and N3312 are each glycosylated (N-linked (GlcNAc...) asparagine). 8 N-linked (GlcNAc...) asparagine glycosylation sites follow: N3432, N3603, N3770, N3774, N3815, N3842, N3875, and N3906. The region spanning 3775 to 3946 (GTTLRFSGQS…RLETWALSQC (172 aa)) is the Laminin G-like domain. 4 disulfide bridges follow: C3914-C3946, C3953-C3964, C3958-C3974, and C3976-C3985. EGF-like domains lie at 3949 to 3986 (PGTA…RNCE) and 3988 to 4024 (GREN…DRCE). A glycan (N-linked (GlcNAc...) asparagine) is linked at N3991. Cystine bridges form between C3992-C4003, C3997-C4012, and C4014-C4023. The chain crosses the membrane as a helical span at residues 4051–4071 (FLVITVALPLVIIATVGLLLY). The Cytoplasmic portion of the chain corresponds to 4072–4351 (CRRRKSHKPV…DYGSCEEVMF (280 aa)). Residues 4316 to 4340 (VNGGPATGRSQPRAPPNYEGSDMVE) form a disordered region.

Homodimer. Cerebellum-specific expression. Expressed in thin parallel fibers of cerebellar granule cells.

Its subcellular location is the cell membrane. The protein localises to the cell junction. The protein resides in the golgi apparatus. It is found in the trans-Golgi network. In terms of biological role, involved in the regulation of cell migration. May be involved in mediating the organization of the parallel fibers of granule cells during cerebellar development. This chain is Protocadherin Fat 2 (Fat2), found in Rattus norvegicus (Rat).